Here is a 404-residue protein sequence, read N- to C-terminus: Intracellular hyaluronan-binding protein 4.L (404 aa).

Disordered regions lie at residues 1-21, 51-288, and 359-379; these read MRLDTMKETPSSPVNTEMQDN, LTRR…QEMS, and LTRPSRGRGGGGRGRVRREEA. The span at 8-19 shows a compositional bias: polar residues; sequence ETPSSPVNTEMQ. Composition is skewed to basic and acidic residues over residues 71 to 81, 145 to 159, and 165 to 184; these read GKKESQKDRKA, KVDRAERRPAFREVR, and RSNEYSIEKPMEILDQDKQM. Positions 188-200 are enriched in gly residues; the sequence is GGRGGMRGRGRGG. Basic and acidic residues-rich tracts occupy residues 205–233 and 270–281; these read TENDNLRGKREFDRHSGSDRAIRPEDKRG and EEHAKVPEEKNE.

It belongs to the SERBP1-HABP4 family. In terms of assembly, associates with ribosomes; promoting ribosome stabilization. Interacts with eef2/eEF2; promoting ribosome stabilization.

Its subcellular location is the nucleus. It is found in the cytoplasm. The protein localises to the stress granule. It localises to the nucleolus. The protein resides in the nucleus speckle. Its subcellular location is the cajal body. Its function is as follows. Ribosome-binding protein that promotes ribosome hibernation, a process during which ribosomes are stabilized in an inactive state and preserved from proteasomal degradation. Acts via its association with eef2/eEF2 factor at the A-site of the ribosome, promoting ribosome stabilization in an inactive state compatible with storage. Plays a key role in ribosome hibernation in the mature egg by promoting ribosome stabilization. Ribosomes, which are produced in large quantities during oogenesis, are stored and translationally repressed in the egg and early embryo. The sequence is that of Intracellular hyaluronan-binding protein 4.L from Xenopus laevis (African clawed frog).